The primary structure comprises 304 residues: UDP-N-acetylenolpyruvoylglucosamine reductase (304 aa).

An FAD-binding PCMH-type domain is found at 31–196; that stretch reads RVGGPAERFY…VAAELELAPG (166 aa). The active site involves Arg-176. Catalysis depends on Ser-225, which acts as the Proton donor. Glu-295 is an active-site residue.

It belongs to the MurB family. It depends on FAD as a cofactor.

It localises to the cytoplasm. It catalyses the reaction UDP-N-acetyl-alpha-D-muramate + NADP(+) = UDP-N-acetyl-3-O-(1-carboxyvinyl)-alpha-D-glucosamine + NADPH + H(+). It functions in the pathway cell wall biogenesis; peptidoglycan biosynthesis. In terms of biological role, cell wall formation. This Methylococcus capsulatus (strain ATCC 33009 / NCIMB 11132 / Bath) protein is UDP-N-acetylenolpyruvoylglucosamine reductase.